We begin with the raw amino-acid sequence, 299 residues long: UBX domain-containing protein 1 (299 aa).

3 disordered regions span residues A39 to P61, K127 to E176, and E191 to K218. The span at D46–P61 shows a compositional bias: low complexity. A coiled-coil region spans residues A111 to R179. Basic and acidic residues predominate over residues A128 to E176. Residues P201–P213 are compositionally biased toward low complexity. The 78-residue stretch at K218–L295 folds into the UBX domain.

Interacts with cdc-48.1 (via N-terminus) and cdc-48.2 (via N-terminus) in vitro; the interaction with cdc-48.1 is not detected in vivo. In terms of tissue distribution, expressed in the germline (at protein level). Expressed in spermatocytes but not in mature sperm (at protein level). Ubiquitously expressed. Predominantly expressed in the spermatheca.

Its subcellular location is the cytoplasm. The protein localises to the perinuclear region. In terms of biological role, ubiquitin-binding protein which acts as an adapter for ATPase cdc-48.1 and/or cdc-48.2, conferring substrate specificity. Together with ubxn-2 and ubxn-3, plays a role in hermaphrodite spermatogenesis probably by promoting the degradation of sex determination terminal factor tra-1. This Caenorhabditis elegans protein is UBX domain-containing protein 1.